A 713-amino-acid polypeptide reads, in one-letter code: Serologically defined colon cancer antigen 8 (713 aa).

2 positions are modified to phosphoserine: serine 4 and serine 28. The segment at 84–103 is disordered; sequence QADKESEVSPSRRRKMSPLR. The stretch at 129–175 forms a coiled coil; it reads IHHLEAEVKFCKEELSGMKNKIQVVVLENEGLQQQLKSQRQEETLRE. The tract at residues 194–215 is disordered; that stretch reads EDSGVGETSKRPFSHDNADFGK. Over residues 201 to 212 the composition is skewed to basic and acidic residues; sequence TSKRPFSHDNAD. Residues 216-713 are sufficient for homodimerization; the sequence is AASAGEQLEL…QLPSMPQSDC (498 aa). Coiled coils occupy residues 223–273 and 348–707; these read LELE…LLAA and EEAN…QLPS. The mediates interaction with OFD1 stretch occupies residues 533 to 713; it reads HQLHLTRQEK…QLPSMPQSDC (181 aa).

Homodimer. Interacts with OFD1; the interaction is direct. Interacts with FAM161A. Interacts with RABEP2, ERC1 and CEP131. As to expression, expressed in thymus, prostate, testis, ovary, small intestine, colon, mucosa, colon and renal cancer tumors.

The protein localises to the cytoplasm. It localises to the cytoskeleton. It is found in the microtubule organizing center. Its subcellular location is the centrosome. The protein resides in the centriole. The protein localises to the cilium basal body. It localises to the cell junction. Plays a role in the establishment of cell polarity and epithelial lumen formation. Also plays an essential role in ciliogenesis and subsequent Hedgehog signaling pathway that requires the presence of intact primary cilia for pathway activation. Mechanistically, interacts with and mediates RABEP2 centrosomal localization which is critical for ciliogenesis. This Homo sapiens (Human) protein is Serologically defined colon cancer antigen 8 (SDCCAG8).